A 146-amino-acid chain; its full sequence is Holo-[acyl-carrier-protein] synthase (146 aa).

Asp8 and Glu61 together coordinate Mg(2+).

Belongs to the P-Pant transferase superfamily. AcpS family. Requires Mg(2+) as cofactor.

The protein localises to the cytoplasm. The catalysed reaction is apo-[ACP] + CoA = holo-[ACP] + adenosine 3',5'-bisphosphate + H(+). Functionally, transfers the 4'-phosphopantetheine moiety from coenzyme A to a Ser of acyl-carrier-protein. This is Holo-[acyl-carrier-protein] synthase from Rhodopseudomonas palustris (strain TIE-1).